The sequence spans 400 residues: Phosphoglycerate kinase (400 aa).

Residues aspartate 23–asparagine 25, arginine 38, histidine 61–arginine 64, arginine 120, and arginine 153 each bind substrate. ATP is bound by residues lysine 203, glutamate 325, and glycine 355–threonine 358.

It belongs to the phosphoglycerate kinase family. In terms of assembly, monomer.

It localises to the cytoplasm. It catalyses the reaction (2R)-3-phosphoglycerate + ATP = (2R)-3-phospho-glyceroyl phosphate + ADP. It functions in the pathway carbohydrate degradation; glycolysis; pyruvate from D-glyceraldehyde 3-phosphate: step 2/5. In Methylorubrum extorquens (strain CM4 / NCIMB 13688) (Methylobacterium extorquens), this protein is Phosphoglycerate kinase.